The chain runs to 369 residues: DNA replication and repair protein RecF (369 aa).

Residue 30-37 coordinates ATP; sequence GDNGSGKT.

Belongs to the RecF family.

The protein localises to the cytoplasm. In terms of biological role, the RecF protein is involved in DNA metabolism; it is required for DNA replication and normal SOS inducibility. RecF binds preferentially to single-stranded, linear DNA. It also seems to bind ATP. The chain is DNA replication and repair protein RecF from Pseudomonas paraeruginosa (strain DSM 24068 / PA7) (Pseudomonas aeruginosa (strain PA7)).